Consider the following 22-residue polypeptide: Thylakoid lumenal 11 kDa protein (22 aa).

Residues 1 to 22 (FKGGGPYGQGVTRGQDLSGKDF) are disordered.

This sequence to A.thaliana At2g44920.

It localises to the plastid. Its subcellular location is the chloroplast thylakoid lumen. This is Thylakoid lumenal 11 kDa protein from Spinacia oleracea (Spinach).